A 20-amino-acid polypeptide reads, in one-letter code: Styelin-A (20 aa).

As to expression, hemocytes and pharyngeal tissues.

It localises to the secreted. Its function is as follows. Bactericidal against several Gram-positive and Gram-negative bacteria. The sequence is that of Styelin-A from Styela clava (Sea squirt).